The primary structure comprises 895 residues: Protein translocase subunit SecA (895 aa).

ATP-binding positions include Q89, 107 to 111 (GEGKT), and D502. 2 disordered regions span residues 560 to 579 (RRIDNQLRGRSGRQGDPGRT) and 848 to 884 (AAPAAEPVEAPKEGFVEDDPSTWGNPSRNDKCPCGSG). Zn(2+) contacts are provided by C879, C881, C890, and H891.

Belongs to the SecA family. In terms of assembly, monomer and homodimer. Part of the essential Sec protein translocation apparatus which comprises SecA, SecYEG and auxiliary proteins SecDF-YajC and YidC. Requires Zn(2+) as cofactor.

The protein localises to the cell inner membrane. Its subcellular location is the cytoplasm. The enzyme catalyses ATP + H2O + cellular proteinSide 1 = ADP + phosphate + cellular proteinSide 2.. In terms of biological role, part of the Sec protein translocase complex. Interacts with the SecYEG preprotein conducting channel. Has a central role in coupling the hydrolysis of ATP to the transfer of proteins into and across the cell membrane, serving both as a receptor for the preprotein-SecB complex and as an ATP-driven molecular motor driving the stepwise translocation of polypeptide chains across the membrane. This chain is Protein translocase subunit SecA, found in Ruegeria sp. (strain TM1040) (Silicibacter sp.).